Here is a 218-residue protein sequence, read N- to C-terminus: Probable glutamine ABC transporter permease protein GlnP (218 aa).

The next 3 membrane-spanning stretches (helical) occupy residues 19 to 39 (FLVT…FGLI), 65 to 85 (LPLL…GIKL), and 188 to 208 (FFPI…SLSL). An ABC transmembrane type-1 domain is found at 19-210 (FLVTLYVAFI…AVNYSLSLAA (192 aa)).

It belongs to the binding-protein-dependent transport system permease family. As to quaternary structure, the complex is composed of two ATP-binding proteins (GlnQ), two transmembrane proteins (GlnM and GlnP) and a solute-binding protein (GlnH).

The protein localises to the cell membrane. Part of the ABC transporter complex GlnHMPQ involved in glutamine transport. Probably responsible for the translocation of the substrate across the membrane. The chain is Probable glutamine ABC transporter permease protein GlnP (glnP) from Bacillus subtilis (strain 168).